Here is a 395-residue protein sequence, read N- to C-terminus: F-box protein At5g46170 (395 aa).

Residues 24 to 72 enclose the F-box domain; sequence IDHFDHLPDSILLLVFNKIGDVKALGRCCVVSRRFHSLVPQVDNVVVRV. The interval 122-158 is disordered; sequence TKRSSSSCGGSGSSSSSLSISGDDDGGEIEQGGVTHH. Residues 125-142 show a composition bias toward low complexity; that stretch reads SSSSCGGSGSSSSSLSIS.

The chain is F-box protein At5g46170 from Arabidopsis thaliana (Mouse-ear cress).